Consider the following 215-residue polypeptide: Orotate phosphoribosyltransferase (215 aa).

Position 26 (lysine 26) interacts with 5-phospho-alpha-D-ribose 1-diphosphate. 34 to 35 (FF) provides a ligand contact to orotate. 5-phospho-alpha-D-ribose 1-diphosphate contacts are provided by residues 72 to 73 (YK), arginine 99, lysine 100, lysine 103, histidine 105, and 124 to 132 (DDVITAGTA). The orotate site is built by threonine 128 and arginine 156.

The protein belongs to the purine/pyrimidine phosphoribosyltransferase family. PyrE subfamily. As to quaternary structure, homodimer. Mg(2+) is required as a cofactor.

The catalysed reaction is orotidine 5'-phosphate + diphosphate = orotate + 5-phospho-alpha-D-ribose 1-diphosphate. Its pathway is pyrimidine metabolism; UMP biosynthesis via de novo pathway; UMP from orotate: step 1/2. In terms of biological role, catalyzes the transfer of a ribosyl phosphate group from 5-phosphoribose 1-diphosphate to orotate, leading to the formation of orotidine monophosphate (OMP). The protein is Orotate phosphoribosyltransferase of Stutzerimonas stutzeri (strain A1501) (Pseudomonas stutzeri).